The chain runs to 23 residues: Acidic phospholipase CHA-E6a (23 aa).

The protein belongs to the phospholipase A2 family. Group II subfamily. D49 sub-subfamily. Ca(2+) is required as a cofactor. In terms of processing, contains 7 disulfide bonds. In terms of tissue distribution, expressed by the venom gland.

It is found in the secreted. The enzyme catalyses a 1,2-diacyl-sn-glycero-3-phosphocholine + H2O = a 1-acyl-sn-glycero-3-phosphocholine + a fatty acid + H(+). Functionally, snake venom phospholipase A2 (PLA2) that shows high lipolytic (1048 umol/mg/min) and weak ADP-induced platelet aggregation activities. Also shows weak anticoagulant activity (IC(50) is less than 1.0 uM). PLA2 catalyzes the calcium-dependent hydrolysis of the 2-acyl groups in 3-sn-phosphoglycerides. The sequence is that of Acidic phospholipase CHA-E6a from Crotalus horridus (Timber rattlesnake).